The primary structure comprises 226 residues: Phosphate propanoyltransferase (226 aa).

A CoA-binding site is contributed by 44-46 (VSN). Zn(2+)-binding residues include His48 and His50. The CoA site is built by Met72, Lys90, and Arg97. Arg103 contributes to the phosphate binding site. Residue Glu109 participates in Zn(2+) binding. Position 116 (Phe116) interacts with CoA. His157, His159, and His204 together coordinate Zn(2+). Asn211 is a binding site for CoA.

This sequence belongs to the PduL family. In terms of assembly, full-length protein forms large oligomers. Homodimer, when purified in the absence of the encapsulation peptide (EP, residues 1-47). The EP may influence oligomerization. Requires Zn(2+) as cofactor.

Its subcellular location is the bacterial microcompartment. It catalyses the reaction propanoyl-CoA + phosphate = propanoyl phosphate + CoA. It functions in the pathway polyol metabolism; 1,2-propanediol degradation. In terms of biological role, involved in 1,2-propanediol (1,2-PD) utilization within the bacterial microcompartment (BMC) dedicated to 1,2-PD degradation by catalyzing the conversion of propanoyl-CoA to propanoyl-phosphate. CoA is regenerated within the pdu BMC (for use by PduP) via this enzyme, although there must also be cofactor transport across the BMC. Directly targeted to the BMC. Phosphate is probably the first substrate to bind in the forward direction. CoA is probably the first substrate to bind in the reverse direction, and might bind to the enzyme as the BMC assembles, ensuring cofactor encapsulation. The polypeptide is Phosphate propanoyltransferase (Rhodopseudomonas palustris (strain BisB18)).